The primary structure comprises 523 residues: 2-isopropylmalate synthase (523 aa).

Positions 5-267 (VIIFDTTLRD…ETGINAKEIH (263 aa)) constitute a Pyruvate carboxyltransferase domain. Residues aspartate 14, histidine 202, histidine 204, and asparagine 238 each contribute to the Mn(2+) site. The segment at 392–523 (ELQQLVVHSD…QQNKQEFGSV (132 aa)) is regulatory domain.

It belongs to the alpha-IPM synthase/homocitrate synthase family. LeuA type 1 subfamily. In terms of assembly, homodimer. Mn(2+) serves as cofactor.

It is found in the cytoplasm. It catalyses the reaction 3-methyl-2-oxobutanoate + acetyl-CoA + H2O = (2S)-2-isopropylmalate + CoA + H(+). It participates in amino-acid biosynthesis; L-leucine biosynthesis; L-leucine from 3-methyl-2-oxobutanoate: step 1/4. Functionally, catalyzes the condensation of the acetyl group of acetyl-CoA with 3-methyl-2-oxobutanoate (2-ketoisovalerate) to form 3-carboxy-3-hydroxy-4-methylpentanoate (2-isopropylmalate). This is 2-isopropylmalate synthase from Shewanella halifaxensis (strain HAW-EB4).